A 471-amino-acid polypeptide reads, in one-letter code: UDP-N-acetylmuramate--L-alanine ligase (471 aa).

Gly-122–Thr-128 is a binding site for ATP.

The protein belongs to the MurCDEF family.

The protein localises to the cytoplasm. The enzyme catalyses UDP-N-acetyl-alpha-D-muramate + L-alanine + ATP = UDP-N-acetyl-alpha-D-muramoyl-L-alanine + ADP + phosphate + H(+). It functions in the pathway cell wall biogenesis; peptidoglycan biosynthesis. Functionally, cell wall formation. The polypeptide is UDP-N-acetylmuramate--L-alanine ligase (Cutibacterium acnes (strain DSM 16379 / KPA171202) (Propionibacterium acnes)).